Reading from the N-terminus, the 420-residue chain is RING finger protein 39 (420 aa).

An RING-type zinc finger spans residues 88–135 (CPLCGGSFEDPVLLACEHSFCRACLARRWGTPPATDTEASPTACPCCG). Disordered stretches follow at residues 166–186 (PGAR…CLDP) and 246–265 (DRRS…DGPK). The B30.2/SPRY domain occupies 210–420 (DDLPEDYPVV…APLRIVPAES (211 aa)).

The protein localises to the cytoplasm. It catalyses the reaction S-ubiquitinyl-[E2 ubiquitin-conjugating enzyme]-L-cysteine + [acceptor protein]-L-lysine = [E2 ubiquitin-conjugating enzyme]-L-cysteine + N(6)-ubiquitinyl-[acceptor protein]-L-lysine.. It functions in the pathway protein modification; protein ubiquitination. Plays an inhibitory role in anti-RNA viral innate immunity by targeting the adapter DDX3X and promoting its 'Lys-48'-linked polyubiquitination. Alternatively, enhances the cGAS-STING pathway activation by promoting 'Lys-63'-linked ubiquitination of STING1, facilitating the STING1-TBK1 complex formation and STING1 activation. The sequence is that of RING finger protein 39 (RNF39) from Macaca mulatta (Rhesus macaque).